A 598-amino-acid chain; its full sequence is Probable ATP-dependent RNA helicase DDX52 (598 aa).

Lysine 15 carries the post-translational modification N6-acetyllysine. Serine 39 is subject to Phosphoserine. The Q motif signature appears at 166-194 (QLDQEYKINSRLLQNILDAGFQVPTPIQM). The 179-residue stretch at 197 to 375 (IPVMLHGREL…KLNLDNVVSV (179 aa)) folds into the Helicase ATP-binding domain. Residue 210–217 (APTGSGKT) participates in ATP binding. The short motif at 319–322 (DESD) is the DEAD box element. Positions 386–547 (TVEQELLFVG…PVPEYIKGFQ (162 aa)) constitute a Helicase C-terminal domain.

It belongs to the DEAD box helicase family. DDX52/ROK1 subfamily.

The protein localises to the nucleus. Its subcellular location is the nucleolus. It catalyses the reaction ATP + H2O = ADP + phosphate + H(+). Required for efficient ribosome biogenesis. May control cell cycle progression by regulating translation of mRNAs that contain a terminal oligo pyrimidine (TOP) motif in their 5' UTRs, such as GTPBP4. This chain is Probable ATP-dependent RNA helicase DDX52 (Ddx52), found in Mus musculus (Mouse).